The chain runs to 114 residues: Circadian clock oscillator protein KaiB (114 aa).

The protein belongs to the KaiB family. In terms of assembly, may undergo a major conformational rearrangment; in the free state forms homooligomers. When bound to KaiC switches to a monomeric thioredoxin-fold (KaiB(fs)). The active oscillator complex is probably KaiC(6):KaiB(6).

In terms of biological role, component of the KaiBC clock protein complex, which constitutes the main circadian regulator in cyanobacteria; it may modify the ATPase activity of KaiC. Functionally, may be a metamorphic protein which reversibly switches between an inactive tetrameric fold and a rare, thioredoxin-like monomeric fold (KaiB(fs)). KaiB(fs) binds phospho-KaiC, and perhaps clock output effectors. The protein is Circadian clock oscillator protein KaiB of Prochlorococcus marinus (strain MIT 9211).